A 479-amino-acid polypeptide reads, in one-letter code: Fibrinogen beta chain (479 aa).

Residues 1–18 (MRHLWLLLLSVSLVQTQA) form the signal peptide. The segment at 20–82 (TTDSDKVDLS…VERKPPDAGG (63 aa)) is disordered. Residues 33–35 (GHR) form a beta-chain polymerization, binding distal domain of another fibrin region. Composition is skewed to basic and acidic residues over residues 35–45 (RPVDRRKEEPP) and 64–78 (AKVD…RKPP). 2 disulfide bridges follow: Cys219/Cys304 and Cys229/Cys258. In terms of domain architecture, Fibrinogen C-terminal spans 220–476 (NIPVVSGKEC…RMSMKIRPVF (257 aa)). Residue Asn382 is glycosylated (N-linked (GlcNAc...) asparagine). An intrachain disulfide couples Cys412 to Cys425.

As to quaternary structure, heterohexamer; disulfide linked. Contains 2 sets of 3 non-identical chains (alpha, beta and gamma). The 2 heterotrimers are in head to head conformation with the N-termini in a small central domain. Conversion of fibrinogen to fibrin is triggered by thrombin, which cleaves fibrinopeptides A and B from alpha and beta chains, and thus exposes the N-terminal polymerization sites responsible for the formation of the soft clot.

The protein localises to the secreted. Its function is as follows. Cleaved by the protease thrombin to yield monomers which, together with fibrinogen alpha (FGA) and fibrinogen gamma (FGG), polymerize to form an insoluble fibrin matrix. Fibrin has a major function in hemostasis as one of the primary components of blood clots. In addition, functions during the early stages of wound repair to stabilize the lesion and guide cell migration during re-epithelialization. Was originally thought to be essential for platelet aggregation, based on in vitro studies using anticoagulated blood. However subsequent studies have shown that it is not absolutely required for thrombus formation in vivo. Enhances expression of SELP in activated platelets. Maternal fibrinogen is essential for successful pregnancy. Fibrin deposition is also associated with infection, where it protects against IFNG-mediated hemorrhage. May also facilitate the antibacterial immune response via both innate and T-cell mediated pathways. This Rattus norvegicus (Rat) protein is Fibrinogen beta chain (Fgb).